Consider the following 478-residue polypeptide: H(+)/Cl(-) exchange transporter ClcA (478 aa).

The Cytoplasmic portion of the chain corresponds to 1 to 32 (MTHSTQQLSPEGVAEGKRGRLIRELVNRDKTP). The helical transmembrane segment at 33 to 69 (LIILIMAAVVGVVTGLLGVAFDRGVDWVQQQRLLALA) threads the bilayer. At 70 to 76 (NVADYAL) the chain is on the periplasmic side. The chain crosses the membrane as a helical span at residues 77–100 (LVWPLAFIMSALLAMMGYFLVSRF). The Selectivity filter part_1 motif lies at 106–110 (GSGIP). S107 contacts chloride. Positions 109–116 (IPEIEGAM) form an intramembrane region, helical. Topologically, residues 117–123 (EEMRPVR) are cytoplasmic. The next 2 helical transmembrane spans lie at 124 to 141 (WWRV…TLGA) and 148 to 166 (EGPM…VDIF). The Selectivity filter part_2 motif lies at 146 to 150 (GREGP). Residues 167–176 (RLRSPEARHS) lie on the Cytoplasmic side of the membrane. 2 intramembrane regions (helical) span residues 177–189 (LLAT…LSAA) and 193–201 (PLAGILFVI). At 202–214 (EEMRSQFRYSLVS) the chain is on the cytoplasmic side. The chain crosses the membrane as a helical span at residues 215–232 (IKAVFIGVITSTIVYRYF). Topologically, residues 233–252 (NGERAIIEVGKLSDAPLNTL) are periplasmic. The chain crosses the membrane as a helical span at residues 253–281 (WLYLLLGIIFGAVGVIFNALIFRTQDMFV). At 282-287 (RFHGGD) the chain is on the cytoplasmic side. A helical transmembrane segment spans residues 288–309 (WRKLVLIGGLLGGMCGLLALLH). Residues 310–329 (GNAVGGGFALIPIAAAGNFS) lie on the Periplasmic side of the membrane. 2 helical membrane-spanning segments follow: residues 330-349 (IGML…LCFG) and 355-376 (GIFA…LSCA). A Selectivity filter part_3 motif is present at residues 355–359 (GIFAP). I356 and F357 together coordinate chloride. The Periplasmic portion of the chain corresponds to 377-386 (HFFPQYGIEA). The segment at residues 387 to 401 (GTFAIAGMGALFAAS) is an intramembrane region (helical). The note=Loop between two helices intramembrane region spans 402–404 (VRA). An intramembrane region (helical) is located at residues 405–416 (PLTGIVLVLEMT). An intramembrane region (note=Loop between two helices) is located at residues 417–421 (DNYQL). The helical transmembrane segment at 422–438 (ILPMIVTCLGATLIAQF) threads the bilayer. Residues 439-478 (MGGKPLYSAILARTLAKQEQARATVIAQEPAVENTPQIGK) are Cytoplasmic-facing. Residue Y445 coordinates chloride.

The protein belongs to the chloride channel (TC 2.A.49) family. ClcA subfamily. As to quaternary structure, homodimer.

Its subcellular location is the cell inner membrane. The catalysed reaction is 2 chloride(in) + H(+)(out) = 2 chloride(out) + H(+)(in). Its function is as follows. Proton-coupled chloride transporter. Functions as antiport system and exchanges two chloride ions for 1 proton. Probably acts as an electrical shunt for an outwardly-directed proton pump that is linked to amino acid decarboxylation, as part of the extreme acid resistance (XAR) response. This is H(+)/Cl(-) exchange transporter ClcA from Yersinia pestis bv. Antiqua (strain Antiqua).